Here is a 555-residue protein sequence, read N- to C-terminus: Glutamate--tRNA ligase (555 aa).

The short motif at P103 to H113 is the 'HIGH' region element.

The protein belongs to the class-I aminoacyl-tRNA synthetase family. Glutamate--tRNA ligase type 2 subfamily.

Its subcellular location is the cytoplasm. The enzyme catalyses tRNA(Glu) + L-glutamate + ATP = L-glutamyl-tRNA(Glu) + AMP + diphosphate. Its function is as follows. Catalyzes the attachment of glutamate to tRNA(Glu) in a two-step reaction: glutamate is first activated by ATP to form Glu-AMP and then transferred to the acceptor end of tRNA(Glu). This is Glutamate--tRNA ligase from Methanobrevibacter smithii (strain ATCC 35061 / DSM 861 / OCM 144 / PS).